The sequence spans 1453 residues: Chromatin remodeling regulator CECR2 (1453 aa).

The tract at residues 170 to 237 (VQGRSNGELS…DLQTRNGSRG (68 aa)) is disordered. Residues 197–209 (TGKRRGRPPKRKK) show a composition bias toward basic residues. Residues 210-222 (LQEEIISSEKQEE) are compositionally biased toward basic and acidic residues. Positions 223-234 (NSLTSDLQTRNG) are enriched in polar residues. Ser402 bears the Phosphoserine mark. The 105-residue stretch at 414–518 (FELDDDFTAM…RCFHRAMTKH (105 aa)) folds into the Bromo domain. At Thr526 the chain carries Phosphothreonine. 8 disordered regions span residues 536–667 (EKRE…HPPF), 767–796 (HGTTNPGRLGPDEKPHLGPGPSHHPHTLGH), 827–868 (GYMQ…GESM), 884–1020 (VCPP…DNSY), 1046–1072 (VVGEASPCRSEGKGLDGSGSEKPLCPR), 1131–1308 (LASM…YLYG), 1331–1368 (MLQTGSPYTPQRSASHFQPRAYPSPVPAHPPPHPVATQ), and 1396–1453 (QTGT…LDQS). At Ser551 the chain carries Phosphoserine. Polar residues predominate over residues 637–649 (GSLQGSDPTNLHG). A compositionally biased stretch (pro residues) spans 655 to 664 (EAPPGEPLQH). Residues 887–905 (PGVPYHPRQPTPPQLPGPF) show a composition bias toward pro residues. Ser983 bears the Phosphoserine mark. The span at 985-998 (QERETEDSQLKSDA) shows a compositional bias: basic and acidic residues. Residues 999–1020 (SDSADTYKTSKNKNTWPLDNSY) are compositionally biased toward polar residues. An asymmetric dimethylarginine mark is found at Arg1166 and Arg1172. 2 stretches are compositionally biased toward low complexity: residues 1173-1187 (YSYQPPSQPSYHPYQ) and 1202-1211 (QRSLPSQRSP). The segment covering 1228–1250 (NVLSSLQGCETLNTALTSPTQMD) has biased composition (polar residues). The segment covering 1265–1289 (GPEEEKMDESVERPESPKEFLDLDN) has biased composition (basic and acidic residues). Ser1280 is modified (phosphoserine). Composition is skewed to polar residues over residues 1291–1304 (NAATKRQNSLSTSD) and 1331–1346 (MLQTGSPYTPQRSASH). Pro residues predominate over residues 1352–1364 (YPSPVPAHPPPHP).

In terms of assembly, component of the CERF-1 ISWI chromatin remodeling complex (also called the CECR2-containing remodeling factor (CERF) complex) at least composed of CECR2 and SMARCA1. Component of the CERF-5 ISWI chromatin remodeling complex at least composed of CECR2 and SMARCA5/SNF2H. LUZP1 is detected as part of the CERF-1 and CERF-5 complexes in embryonic stem (ES) cells where it is involved in complex stabilization but is not detected in the complexes in the testis. Interacts with CCAR2; CCAR2 may form part of the CERF-1 and/or CEF-5 ISWI chromatin remodeling complexes in ES cells. Interacts with acetylated lysine residues on histone H2A and H3 (in vitro). Interacts with LRPPRC.

It is found in the nucleus. Regulatory subunit of the ATP-dependent CERF-1 and CERF-5 ISWI chromatin remodeling complexes, which form ordered nucleosome arrays on chromatin and facilitate access to DNA during DNA-templated processes such as DNA replication, transcription, and repair. The complexes do not have the ability to slide mononucleosomes to the center of a DNA template. The CERF-1 ISWI chromatin remodeling complex has a lower ATP hydrolysis rate than the CERF-5 ISWI chromatin remodeling complex. Plays a role in various processes during development: required during embryogenesis for neural tube closure and inner ear development. In adults, required for spermatogenesis, via the formation of ISWI-type chromatin complexes. In histone-modifying complexes, CECR2 recognizes and binds acylated histones: binds histones that are acetylated and/or butyrylated. May also be involved through its interaction with LRPPRC in the integration of cytoskeletal network with vesicular trafficking, nucleocytosolic shuttling, transcription, chromosome remodeling and cytokinesis. The polypeptide is Chromatin remodeling regulator CECR2 (Mus musculus (Mouse)).